The sequence spans 198 residues: Recombination protein RecR (198 aa).

Residues 57-72 (CEKCNTFTEAQICEVC) form a C4-type zinc finger. Residues 80–175 (TLLCVVETPA…SVTRLARGVP (96 aa)) enclose the Toprim domain.

Belongs to the RecR family.

In terms of biological role, may play a role in DNA repair. It seems to be involved in an RecBC-independent recombinational process of DNA repair. It may act with RecF and RecO. The chain is Recombination protein RecR from Paraburkholderia phymatum (strain DSM 17167 / CIP 108236 / LMG 21445 / STM815) (Burkholderia phymatum).